The following is a 332-amino-acid chain: HTH-type transcriptional regulator IdnR (332 aa).

Positions 6–60 (ISLQDIATLAGVTKMTVSRYIRSPKKVAKETGERIAKIMEEINYIPNRAPGMLLN) constitute an HTH lacI-type domain. A DNA-binding region (H-T-H motif) is located at residues 8–27 (LQDIATLAGVTKMTVSRYIR).

Functionally, idn operon regulator. May repress gntKU and gntT genes when growing on L-idonate. The sequence is that of HTH-type transcriptional regulator IdnR (idnR) from Escherichia coli (strain K12).